Consider the following 228-residue polypeptide: UPF0758 protein CKR_0778 (228 aa).

The region spanning 106–228 (RICSPQDAAV…FISLKEKGIL (123 aa)) is the MPN domain. Positions 177, 179, and 190 each coordinate Zn(2+). The JAMM motif signature appears at 177–190 (HNHPSGDPSPSNED).

Belongs to the UPF0758 family.

In Clostridium kluyveri (strain NBRC 12016), this protein is UPF0758 protein CKR_0778.